The following is a 201-amino-acid chain: Dephospho-CoA kinase (201 aa).

A DPCK domain is found at 2 to 201; the sequence is MIGLTGGIAS…KRWKVIPEDQ (200 aa). 10–15 serves as a coordination point for ATP; it reads ASGKSS.

Belongs to the CoaE family.

It is found in the cytoplasm. It catalyses the reaction 3'-dephospho-CoA + ATP = ADP + CoA + H(+). The protein operates within cofactor biosynthesis; coenzyme A biosynthesis; CoA from (R)-pantothenate: step 5/5. Catalyzes the phosphorylation of the 3'-hydroxyl group of dephosphocoenzyme A to form coenzyme A. The chain is Dephospho-CoA kinase from Halalkalibacterium halodurans (strain ATCC BAA-125 / DSM 18197 / FERM 7344 / JCM 9153 / C-125) (Bacillus halodurans).